The primary structure comprises 207 residues: Abscisic acid receptor PYL4 (207 aa).

An START-like region spans residues 45-195 (HEVGPNQCCS…NLQSLAKIAE (151 aa)). A disulfide bridge links C52 with C176. Abscisate contacts are provided by residues K81, 111–116 (AASSTE), 138–144 (RLSNYRS), and E160. A Gate loop motif is present at residues 107-111 (SGLPA). The Latch loop signature appears at 137 to 139 (HRL).

The protein belongs to the PYR/PYL/RCAR abscisic acid intracellular receptor family. As to quaternary structure, monomer. Homodimer. Binds ABA on one subunit only. Interacts with HAB1, ABI1 and ABI2, and possibly with other PP2Cs. Binds to CARs protein in an ABA-independent manner, both at the plasma membrane and in the nucleus. Interacts directly with CAR1 and CAR4. Interacts with TOPP1. Interacts with DDA1. Interacts with FREE1 (via N-terminus). Interacts with the E3 ubiquitin-protein ligase RSL1 at the plasma membrane. Ubiquitynated and degraded by the proteasome upon binding to the E3 ubiquitin-protein ligase RSL1 at the plasma membrane.

The protein resides in the cytoplasm. The protein localises to the nucleus. Its subcellular location is the cell membrane. It is found in the vacuole. In terms of biological role, receptor for abscisic acid (ABA) required for ABA-mediated responses such as stomatal closure and germination inhibition. Inhibits the activity of group-A protein phosphatases type 2C (PP2Cs) when activated by ABA. Can be activated by both (-)-ABA and (+)-ABA. This Arabidopsis thaliana (Mouse-ear cress) protein is Abscisic acid receptor PYL4.